A 49-amino-acid chain; its full sequence is Sporulation protein YjcZ (49 aa).

A helical transmembrane segment spans residues 29-49 (STFVLLVVLFILLIIVGASFF).

The protein belongs to the SscA family.

It is found in the membrane. This chain is Sporulation protein YjcZ (yjcZ), found in Bacillus subtilis (strain 168).